The chain runs to 438 residues: Beta-1,3-galactosyl-O-glycosyl-glycoprotein beta-1,6-N-acetylglucosaminyltransferase 3 (438 aa).

At 1-6 (MVQWKR) the chain is on the cytoplasmic side. A helical; Signal-anchor for type II membrane protein membrane pass occupies residues 7 to 26 (LCQLHYLWALGCYMLLATVA). Over 27 to 438 (LKLSFRLKCD…RYKAIYGTEL (412 aa)) the chain is Lumenal. 4 disulfides stabilise this stretch: cysteine 70–cysteine 227, cysteine 161–cysteine 382, cysteine 182–cysteine 209, and cysteine 391–cysteine 423. Asparagine 289 is a glycosylation site (N-linked (GlcNAc...) asparagine).

Belongs to the glycosyltransferase 14 family. In terms of processing, N-glycosylated. Primarily expressed in mucus-secreting tissues. Expressed in colon, kidney, small intestine, trachea, and stomach, where mucin is produced.

It localises to the golgi apparatus membrane. The catalysed reaction is a 3-O-[beta-D-galactosyl-(1-&gt;3)-N-acetyl-alpha-D-galactosaminyl]-L-seryl-[protein] + UDP-N-acetyl-alpha-D-glucosamine = 3-O-{beta-D-galactosyl-(1-&gt;3)-[N-acetyl-beta-D-glucosaminyl-(1-&gt;6)]-N-acetyl-alpha-D-galactosaminyl}-L-seryl-[protein] + UDP + H(+). The enzyme catalyses a 3-O-[beta-D-galactosyl-(1-&gt;3)-N-acetyl-alpha-D-galactosaminyl]-L-threonyl-[protein] + UDP-N-acetyl-alpha-D-glucosamine = a 3-O-{beta-D-galactosyl-(1-&gt;3)-[N-acetyl-beta-D-glucosaminyl-(1-&gt;6)]-N-acetyl-alpha-D-galactosaminyl}-L-threonyl-[protein] + UDP + H(+). It catalyses the reaction a beta-D-Gal-(1-&gt;4)-beta-D-GlcNAc-(1-&gt;3)-beta-D-Gal-(1-&gt;4)-beta-D-GlcNAc derivative + UDP-N-acetyl-alpha-D-glucosamine = a beta-D-Gal-(1-&gt;4)-beta-D-GlcNAc-(1-&gt;3)-[beta-D-GlcNAc-(1-&gt;6)]-beta-D-Gal-(1-&gt;4)-N-acetyl-beta-D-glucosaminyl derivative + UDP + H(+). It carries out the reaction 3-O-[N-acetyl-beta-D-glucosaminyl-(1-&gt;3)-N-acetyl-alpha-D-galactosaminyl]-L-seryl-[protein] + UDP-N-acetyl-alpha-D-glucosamine = 3-O-[N-acetyl-beta-D-glucosaminyl-(1-&gt;3)-[N-acetyl-beta-D-glucosaminyl-(1-&gt;6)]-N-acetyl-alpha-D-galactosaminyl]-L-seryl-[protein] + UDP + H(+). The catalysed reaction is a 3-O-[N-acetyl-beta-D-glucosaminyl-(1-&gt;3)-N-acetyl-alpha-D-galactosaminyl]-L-threonyl-[protein] + UDP-N-acetyl-alpha-D-glucosamine = 3-O-[N-acetyl-beta-D-glucosaminyl-(1-&gt;3)-[N-acetyl-beta-D-glucosaminyl-(1-&gt;6)]-N-acetyl-alpha-D-galactosaminyl]-L-threonyl-[protein] + UDP + H(+). It functions in the pathway protein modification; protein glycosylation. Its function is as follows. Glycosyltransferase that can synthesize all known mucin beta 6 N-acetylglucosaminides. Mediates core 2 and core 4 O-glycan branching, 2 important steps in mucin-type biosynthesis. Also has I-branching enzyme activity by converting linear into branched poly-N-acetyllactosaminoglycans, leading to introduce the blood group I antigen during embryonic development. The polypeptide is Beta-1,3-galactosyl-O-glycosyl-glycoprotein beta-1,6-N-acetylglucosaminyltransferase 3 (GCNT3) (Homo sapiens (Human)).